The following is a 156-amino-acid chain: Ribosomal RNA large subunit methyltransferase H (156 aa).

S-adenosyl-L-methionine contacts are provided by residues Leu73, Gly104, and 123 to 128 (LSPLTL).

This sequence belongs to the RNA methyltransferase RlmH family. As to quaternary structure, homodimer.

It is found in the cytoplasm. The enzyme catalyses pseudouridine(1915) in 23S rRNA + S-adenosyl-L-methionine = N(3)-methylpseudouridine(1915) in 23S rRNA + S-adenosyl-L-homocysteine + H(+). In terms of biological role, specifically methylates the pseudouridine at position 1915 (m3Psi1915) in 23S rRNA. This chain is Ribosomal RNA large subunit methyltransferase H, found in Photobacterium profundum (strain SS9).